Consider the following 393-residue polypeptide: Seven-bladed beta-propeller protein Rv1057 (393 aa).

Positions 208-230 (DGGRIGSRSRSRQKSSKPRGNQA) are disordered. A compositionally biased stretch (basic residues) spans 214-224 (SRSRSRQKSSK).

In terms of biological role, may play an important role in host-pathogen interactions and in ESAT-6 secretion. The polypeptide is Seven-bladed beta-propeller protein Rv1057 (Mycobacterium tuberculosis (strain ATCC 25618 / H37Rv)).